Here is a 341-residue protein sequence, read N- to C-terminus: Methionine import ATP-binding protein MetN 2 (341 aa).

The ABC transporter domain maps to 2–241 (IEASELTKVY…PKAPLTQEFI (240 aa)). 38-45 (GYSGAGKS) contacts ATP.

The protein belongs to the ABC transporter superfamily. Methionine importer (TC 3.A.1.24) family. The complex is composed of two ATP-binding proteins (MetN), two transmembrane proteins (MetI) and a solute-binding protein (MetQ).

It is found in the cell membrane. It carries out the reaction L-methionine(out) + ATP + H2O = L-methionine(in) + ADP + phosphate + H(+). The catalysed reaction is D-methionine(out) + ATP + H2O = D-methionine(in) + ADP + phosphate + H(+). Its function is as follows. Part of the ABC transporter complex MetNIQ involved in methionine import. Responsible for energy coupling to the transport system. The protein is Methionine import ATP-binding protein MetN 2 of Shouchella clausii (strain KSM-K16) (Alkalihalobacillus clausii).